The chain runs to 241 residues: Peroxisomal membrane protein 11C (241 aa).

Residues 1–122 (MALLNRLASA…ADAKVLRVDS (122 aa)) lie on the Cytoplasmic side of the membrane. The helical transmembrane segment at 123–149 (AWWWTLNTALWTLSLLLGAVKALWTML) threads the bilayer. Residues 150 to 211 (KLRQKLRSPT…GVLWAGRFPP (62 aa)) are Lumenal-facing. The helical transmembrane segment at 212–227 (WLVGLMGTISSILSTC) threads the bilayer. At 228–241 (QAVRAGRQAEADSP) the chain is on the cytoplasmic side.

The protein belongs to the peroxin-11 family. Homodimer. Heterodimer with either PEX11A or PEX11B. Interacts with FIS1. In terms of tissue distribution, expressed in liver and at much lower levels in heart, kidney and testis.

The protein localises to the peroxisome membrane. Promotes membrane protrusion and elongation on the peroxisomal surface. This is Peroxisomal membrane protein 11C (Pex11g) from Mus musculus (Mouse).